Reading from the N-terminus, the 503-residue chain is Transcription termination/antitermination protein NusA (503 aa).

Residues 139–203 (GDIINGIVKR…KGPQIFLSRV (65 aa)) form the S1 motif domain. Residues 308-378 (SHKVEVVVSQ…LDVEEVIGQL (71 aa)) enclose the KH domain.

It belongs to the NusA family. In terms of assembly, monomer. Binds directly to the core enzyme of the DNA-dependent RNA polymerase and to nascent RNA.

It localises to the cytoplasm. Participates in both transcription termination and antitermination. The polypeptide is Transcription termination/antitermination protein NusA (Rickettsia prowazekii (strain Madrid E)).